Here is a 299-residue protein sequence, read N- to C-terminus: HTH-type transcriptional regulator ArgP (299 aa).

The HTH lysR-type domain maps to 2 to 58 (FDYKLLSALAAVIEQAGFERAAQVLGLSQSAISQRIKLLEARVGQPVLVRVTPPAPT). Positions 19 to 38 (FERAAQVLGLSQSAISQRIK) form a DNA-binding region, H-T-H motif.

Belongs to the LysR transcriptional regulatory family. As to quaternary structure, homodimer.

Its function is as follows. Controls the transcription of genes involved in arginine and lysine metabolism. This Pseudomonas fluorescens (strain ATCC BAA-477 / NRRL B-23932 / Pf-5) protein is HTH-type transcriptional regulator ArgP.